The following is a 627-amino-acid chain: Myelin-associated glycoprotein (627 aa).

An N-terminal signal peptide occupies residues 1-19 (MIFLATLPLFWIMISASRG). The segment at 20-325 (GHWGAWMPST…RTVELSVMYA (306 aa)) is interaction with RTN4R and RTN4RL2. Residues 20–516 (GHWGAWMPST…HRLMWAKIGP (497 aa)) are Extracellular-facing. A C-linked (Man) tryptophan glycan is attached at W22. Positions 22-120 (WGAWMPSTIS…LGGKYYFRGD (99 aa)) constitute an Ig-like V-type domain. Cystine bridges form between C37–C165, C42–C100, and C159–C217. 65 to 67 (YPK) is a binding site for a ganglioside GT1b (d18:1(4E)). N99 carries an N-linked (GlcNAc...) asparagine glycan. Residues R118 and 124–128 (YNQYT) each bind a ganglioside GT1b (d18:1(4E)). Ig-like C2-type domains are found at residues 139–237 (NTPN…LDVK), 241–325 (VIVE…VMYA), 327–412 (WKPT…VEFA), and 413–508 (PIIL…GAHR). 2 N-linked (GlcNAc...) asparagine glycosylation sites follow: N223 and N246. C261 and C305 form a disulfide bridge. N-linked (GlcNAc...) asparagine glycans are attached at residues N315 and N332. C347 and C392 form a disulfide bridge. N406 carries an N-linked (GlcNAc...) asparagine glycan. 2 disulfide bridges follow: C421–C430 and C432–C488. Residues N450 and N454 are each glycosylated (N-linked (GlcNAc...) asparagine). A helical transmembrane segment spans residues 517–536 (VGAVVAFAILIAIVCYITQT). The S-palmitoyl cysteine moiety is linked to residue C531. The Cytoplasmic segment spans residues 537-627 (RRKKNVTESS…LAEYAEIRVK (91 aa)). Residues S545, S547, S549, and S591 each carry the phosphoserine modification. Residues 578-627 (LGSERRLLGLRGESPELDLSYSHSDLGKRPTKDSYTLTEELAEYAEIRVK) are required for normal axon myelination in the central nervous system.

This sequence belongs to the immunoglobulin superfamily. SIGLEC (sialic acid binding Ig-like lectin) family. Monomer and homodimer. Interacts (via the first three N-terminal Ig-like domains) with RTN4R and RTN4RL2. Interacts with isoform 2 of BSG. In terms of processing, N-glycosylated. Phosphorylated on tyrosine residues. Post-translationally, ubiquitinated, leading to proteasomal degradation. In terms of tissue distribution, detected in the myelin tract in brain, especially in the corpus callosum and in peripheral nerve. Expressed by myelinating glial cells in the central and peripheral nervous system. Detected in oligodendrocyte processes before formation of compact myelin. Restricted to the periaxonal space after myelination. Isoform S-MAG is the predominant isoform in CNS and PNS of the adult (at protein level).

It localises to the cell membrane. The protein resides in the membrane raft. Adhesion molecule that mediates interactions between myelinating cells and neurons by binding to neuronal sialic acid-containing gangliosides and to the glycoproteins RTN4R and RTN4RL2. Not required for initial myelination, but seems to play a role in the maintenance of normal axon myelination. Protects motoneurons against apoptosis, also after injury; protection against apoptosis is probably mediated via interaction with neuronal RTN4R and RTN4RL2. Required to prevent degeneration of myelinated axons in adults; this probably depends on binding to gangliosides on the axon cell membrane. Negative regulator of neurite outgrowth that inhibits axon longitudinal growth. Negative regulator of neurite outgrowth; in dorsal root ganglion neurons the inhibition is mediated primarily via binding to neuronal RTN4R or RTN4RL2 and to a lesser degree via binding to neuronal gangliosides. In cerebellar granule cells the inhibition is mediated via binding to neuronal gangliosides. In sensory neurons, inhibition of neurite extension depends only partially on RTN4R, RTN4RL2 and gangliosides. Inhibits axon outgrowth by binding to RTN4R. Preferentially binds to alpha-2,3-linked sialic acid. Binds ganglioside Gt1b. The chain is Myelin-associated glycoprotein (Mag) from Mus musculus (Mouse).